The sequence spans 714 residues: MPAESAKRFKPSKYVPVSAAAIFLVGATTLFFAFTCPGLSLSVSPAVPVYNAVVFLFVLANFSMATFMDPGVFPRAEEDEDKEDDFRAPLYKTVEIKGIQVRMKWCATCRFYRPPRCSHCSVCDNCVEEFDHHCPWVNNCIGRRNYRYFFLFLLSLTAHITGVFGFGLLYVLYHMEELSGVRTAVTMAVMCVAGLFFIPVAGLTGFHVVLVARGRTTNEQVTGKFRGGVNPFTNGCCNNVSRVLCSSPAPRYLGRPKKEKTIVIRPPFLRPEVSDGQITVKIMDNGIQGELRRTKSKGSLEVTESQSADAEPPPPPKPDLSRYTGLRTHLSLATNEESSLLGKDSPPTPTMYKYRPGYSSSSASAAMPHSSSAKLSRGDSLKEPPSIAESSRQPSYRSEPSLEPESFRSPTLGKGFPFDPLSSGSRSSSLKSAQGTGFELGPLQSIRSEGTTSTSYKSLANQTRNGSLSYDSLLTPSDSPDFESVQAGPEPEPPLGYTSPFLSARLAQQREAERHPRLAPGGPAPREPSPVRYDNLSRHIVASLQEREKLLRQSPPPGREEEPGLGDSGVQCTPGSGHAPRTSSSSDDSKRSPLGKTPLARPVAPRFGKPDGLRGRGLASPEPGLPAPYLGRSVSYSSQKAPPGVPETEEVALQPLLTPKDEVQLKTAYSKSNGQPKSIGSAPPGPGQPPLSSPTRGGVKKVSGVGGTTYEISV.

Over Met-1 to Lys-13 the chain is Cytoplasmic. Residues Tyr-14–Phe-34 form a helical membrane-spanning segment. At Thr-35–Ala-52 the chain is on the extracellular side. The helical transmembrane segment at Val-53–Phe-73 threads the bilayer. Residues Pro-74–Tyr-148 lie on the Cytoplasmic side of the membrane. Tyr-91 bears the Phosphotyrosine mark. One can recognise a DHHC domain in the interval Lys-104–Leu-154. Cys-134 functions as the S-palmitoyl cysteine intermediate in the catalytic mechanism. The helical transmembrane segment at Phe-149 to Leu-169 threads the bilayer. Residues Tyr-170–Cys-191 are Extracellular-facing. Residues Val-192–Ala-212 form a helical membrane-spanning segment. Residues Arg-213–Val-714 lie on the Cytoplasmic side of the membrane. Phosphoserine is present on Ser-247. The tract at residues Gly-289–Val-714 is disordered. Thr-294 carries the phosphothreonine modification. 2 positions are modified to phosphoserine: Ser-296 and Ser-299. The residue at position 303 (Thr-303) is a Phosphothreonine. Ser-345 carries the phosphoserine modification. A phosphothreonine mark is found at Thr-348 and Thr-350. Low complexity predominate over residues Ser-359–Ala-373. Residues Ser-380, Ser-398, Ser-406, and Ser-409 each carry the phosphoserine modification. The span at Ala-388–Ser-398 shows a compositional bias: polar residues. Thr-411 is subject to Phosphothreonine. Residues Ser-422 to Ser-432 show a composition bias toward low complexity. Phosphoserine occurs at positions 425, 429, and 432. Residue Thr-436 is modified to Phosphothreonine. A compositionally biased stretch (polar residues) spans Ser-445 to Asp-478. Phosphoserine occurs at positions 529 and 554. Position 616 is an omega-N-methylarginine (Arg-616). At Ser-620 the chain carries Phosphoserine. A Phosphothreonine modification is found at Thr-658. Over residues Thr-667–Ser-678 the composition is skewed to polar residues. Over residues Pro-683 to Ser-692 the composition is skewed to pro residues. Ser-693 carries the post-translational modification Phosphoserine. Arg-696 is subject to Omega-N-methylarginine.

This sequence belongs to the DHHC palmitoyltransferase family. ERF2/ZDHHC9 subfamily. Phosphorylation regulates association with endocytic proteins and its subcellular localization. Phosphorylation by LYN during fatty acid uptake leads to inactivation of the activity. Post-translationally, autopalmitoylated. Palmitoylation of the C-terminal tail regulates stimulation-dependent plasma membrane motility.

The protein resides in the cell membrane. The catalysed reaction is L-cysteinyl-[protein] + hexadecanoyl-CoA = S-hexadecanoyl-L-cysteinyl-[protein] + CoA. Palmitoyltransferase that catalyzes the addition of palmitate onto various protein substrates such as CTNND2, CD36, GSDMD, NLRP3, NOD1, NOD2, STAT3 and S1PR1 thus plays a role in various biological processes including cell adhesion, inflammation, fatty acid uptake, bacterial sensing or cardiac functions. Plays an important role in the regulation of synapse efficacy by mediating palmitoylation of delta-catenin/CTNND2, thereby increasing synaptic delivery and surface stabilization of alpha-amino-3-hydroxy-5-methyl-4-isoxazole propionic acid receptors (AMPARs). Under basal conditions, remains at the synaptic membrane through FYN-mediated phosphorylation that prevents association with endocytic proteins. Neuronal activity enhances the internalization and trafficking of DHHC5 from spines to dendritic shafts where it palmitoylates delta-catenin/CTNND2. Regulates cell adhesion at the plasma membrane by palmitoylating GOLGA7B and DSG2. Plays a role in innate immune response by mediating the palmitoylation of NOD1 and NOD2 and their proper recruitment to the bacterial entry site and phagosomes. Also participates in fatty acid uptake by palmitoylating CD36 and thereby targeting it to the plasma membrane. Upon binding of fatty acids to CD36, gets phosphorylated by LYN leading to inactivation and subsequent CD36 caveolar endocytosis. Controls oligodendrocyte development by catalyzing STAT3 palmitoylation. Acts as a regulator of inflammatory response by mediating palmitoylation of NLRP3 and GSDMD. Palmitoylates NLRP3 to promote inflammasome assembly and activation. Activates pyroptosis by catalyzing palmitoylation of gasdermin-D (GSDMD), thereby promoting membrane translocation and pore formation of GSDMD. This Bos taurus (Bovine) protein is Palmitoyltransferase ZDHHC5 (ZDHHC5).